We begin with the raw amino-acid sequence, 611 residues long: DNA mismatch repair protein MutL (611 aa).

The protein belongs to the DNA mismatch repair MutL/HexB family.

This protein is involved in the repair of mismatches in DNA. It is required for dam-dependent methyl-directed DNA mismatch repair. May act as a 'molecular matchmaker', a protein that promotes the formation of a stable complex between two or more DNA-binding proteins in an ATP-dependent manner without itself being part of a final effector complex. This chain is DNA mismatch repair protein MutL, found in Rickettsia bellii (strain RML369-C).